Reading from the N-terminus, the 465-residue chain is Probable inactive receptor-like kinase BSK12 (465 aa).

Residues 1-12 (MGCCYSLSSTVD) show a composition bias toward polar residues. A disordered region spans residues 1–34 (MGCCYSLSSTVDPVQDHTTDASSEPRNGGGEDPP). Glycine 2 carries N-myristoyl glycine lipidation. Residues cysteine 3 and cysteine 4 are each lipidated (S-palmitoyl cysteine). One can recognise a Protein kinase domain in the interval 50-291 (FSPENIVSDQ…KEIVATLETL (242 aa)). ATP contacts are provided by residues 56–64 (VSDQTSDVV) and lysine 78.

The protein belongs to the protein kinase superfamily. Ser/Thr protein kinase family. Interacts with YDA. In terms of processing, diacylation-mediated membrane association is essential for BSK12 function. As to expression, expressed at the mRNA level in the sperm cells in mature pollen, but the protein is only detectable in the zygote and the micropylar endosperm upon fertilization.

It localises to the cell membrane. In terms of biological role, probable inactive protein kinase that activates the YODA MAP kinase cascade, which regulates the asymmetric first division and embryo polarity, by promoting the elongation of the zygote and the development of its basal daughter cell into the extra-embryonic suspensor. Acts as an adapter at the plasma membrane, possibly by recruiting and binding an activator. The polypeptide is Probable inactive receptor-like kinase BSK12 (Arabidopsis thaliana (Mouse-ear cress)).